We begin with the raw amino-acid sequence, 298 residues long: Transcription factor BOA (298 aa).

Disordered regions lie at residues 1–26 (MGKE…EYRI), 79–143 (LRSS…KRPR), and 206–232 (EDPY…GGGS). The span at 10-20 (YGDDDGEDAGG) shows a compositional bias: acidic residues. Residues 104 to 113 (DPKKQKKSDG) show a composition bias toward basic and acidic residues. Over residues 122 to 131 (STAEEGDSGP) the composition is skewed to acidic residues. Residues 138–197 (TSKRPRLVWTPQLHKRFVDVVAHLGIKNAVPKTIMQLMNVEGLTRENVASHLQKYRLYLK) constitute a DNA-binding region (myb-like GARP). The span at 209-227 (YSSSDQLFSSTPVPPQSFQ) shows a compositional bias: polar residues.

It localises to the nucleus. Transcription factor that is a critical component of the regulatory circuit of the circadian clock. Binds to specific sites on CCA1 promoter leading to CCA1 activation. Is required for the rhythmic expression of other clock genes such as LHY, GI and APRR1/TOC1. This chain is Transcription factor BOA (BOA), found in Arabidopsis thaliana (Mouse-ear cress).